The chain runs to 365 residues: Protein-glutamate methylesterase/protein-glutamine glutaminase (365 aa).

The 118-residue stretch at 5-122 (KVLIVDDSAF…SLDIRKIGEK (118 aa)) folds into the Response regulatory domain. Position 56 is a 4-aspartylphosphate (Asp56). Residues 146 to 155 (IKKEKQDESS) show a composition bias toward basic and acidic residues. Residues 146–167 (IKKEKQDESSTPKPQVEKTSGL) are disordered. Over residues 156–167 (TPKPQVEKTSGL) the composition is skewed to polar residues. The CheB-type methylesterase domain occupies 177-363 (ILIGSSTGGP…LEIIKFAKKI (187 aa)). Active-site residues include Ser182, His208, and Asp305.

It belongs to the CheB family. In terms of processing, phosphorylated by CheA. Phosphorylation of the N-terminal regulatory domain activates the methylesterase activity.

The protein resides in the cytoplasm. It carries out the reaction [protein]-L-glutamate 5-O-methyl ester + H2O = L-glutamyl-[protein] + methanol + H(+). The enzyme catalyses L-glutaminyl-[protein] + H2O = L-glutamyl-[protein] + NH4(+). Functionally, involved in chemotaxis. Part of a chemotaxis signal transduction system that modulates chemotaxis in response to various stimuli. Catalyzes the demethylation of specific methylglutamate residues introduced into the chemoreceptors (methyl-accepting chemotaxis proteins or MCP) by CheR. Also mediates the irreversible deamidation of specific glutamine residues to glutamic acid. In Methanococcus maripaludis (strain DSM 14266 / JCM 13030 / NBRC 101832 / S2 / LL), this protein is Protein-glutamate methylesterase/protein-glutamine glutaminase.